Reading from the N-terminus, the 415-residue chain is tRNA(Ile)-lysidine synthase (415 aa).

An ATP-binding site is contributed by Ser36 to Ser41.

It belongs to the tRNA(Ile)-lysidine synthase family.

Its subcellular location is the cytoplasm. It carries out the reaction cytidine(34) in tRNA(Ile2) + L-lysine + ATP = lysidine(34) in tRNA(Ile2) + AMP + diphosphate + H(+). In terms of biological role, ligates lysine onto the cytidine present at position 34 of the AUA codon-specific tRNA(Ile) that contains the anticodon CAU, in an ATP-dependent manner. Cytidine is converted to lysidine, thus changing the amino acid specificity of the tRNA from methionine to isoleucine. The protein is tRNA(Ile)-lysidine synthase of Tropheryma whipplei (strain Twist) (Whipple's bacillus).